The following is a 116-amino-acid chain: Phosphoribosyl-AMP cyclohydrolase (116 aa).

Mg(2+) is bound at residue Asp-80. Cys-81 contributes to the Zn(2+) binding site. Mg(2+)-binding residues include Asp-82 and Asp-84. Zn(2+) contacts are provided by Cys-98 and Cys-105.

It belongs to the PRA-CH family. In terms of assembly, homodimer. The cofactor is Mg(2+). It depends on Zn(2+) as a cofactor.

The protein localises to the cytoplasm. The catalysed reaction is 1-(5-phospho-beta-D-ribosyl)-5'-AMP + H2O = 1-(5-phospho-beta-D-ribosyl)-5-[(5-phospho-beta-D-ribosylamino)methylideneamino]imidazole-4-carboxamide. Its pathway is amino-acid biosynthesis; L-histidine biosynthesis; L-histidine from 5-phospho-alpha-D-ribose 1-diphosphate: step 3/9. In terms of biological role, catalyzes the hydrolysis of the adenine ring of phosphoribosyl-AMP. This chain is Phosphoribosyl-AMP cyclohydrolase, found in Trichormus variabilis (strain ATCC 29413 / PCC 7937) (Anabaena variabilis).